Here is a 311-residue protein sequence, read N- to C-terminus: Light-independent protochlorophyllide reductase iron-sulfur ATP-binding protein (311 aa).

Residues 10-15 (GIGKST) and lysine 39 contribute to the ATP site. Residue serine 14 coordinates Mg(2+). [4Fe-4S] cluster-binding residues include cysteine 95 and cysteine 129. 180–181 (NR) contributes to the ATP binding site.

This sequence belongs to the NifH/BchL/ChlL family. In terms of assembly, homodimer. Protochlorophyllide reductase is composed of three subunits; ChlL, ChlN and ChlB. The cofactor is [4Fe-4S] cluster.

The protein localises to the plastid. The protein resides in the chloroplast. The enzyme catalyses chlorophyllide a + oxidized 2[4Fe-4S]-[ferredoxin] + 2 ADP + 2 phosphate = protochlorophyllide a + reduced 2[4Fe-4S]-[ferredoxin] + 2 ATP + 2 H2O. It functions in the pathway porphyrin-containing compound metabolism; chlorophyll biosynthesis (light-independent). Component of the dark-operative protochlorophyllide reductase (DPOR) that uses Mg-ATP and reduced ferredoxin to reduce ring D of protochlorophyllide (Pchlide) to form chlorophyllide a (Chlide). This reaction is light-independent. The L component serves as a unique electron donor to the NB-component of the complex, and binds Mg-ATP. The sequence is that of Light-independent protochlorophyllide reductase iron-sulfur ATP-binding protein from Oltmannsiellopsis viridis (Marine flagellate).